Consider the following 333-residue polypeptide: 5-formaminoimidazole-4-carboxamide-1-(beta)-D-ribofuranosyl 5'-monophosphate synthetase (333 aa).

2 residues coordinate 5-amino-1-(5-phospho-beta-D-ribosyl)imidazole-4-carboxamide: H21 and S84. In terms of domain architecture, ATP-grasp spans 118–313 (MELLAAAGIP…YFDEPMDMGE (196 aa)). Residues 141-187 (PVIV…VPAY) and E209 each bind ATP. N229 lines the 5-amino-1-(5-phospho-beta-D-ribosyl)imidazole-4-carboxamide pocket. Residues E268 and E281 each contribute to the Mg(2+) site.

The protein belongs to the phosphohexose mutase family. Mg(2+) serves as cofactor. Mn(2+) is required as a cofactor.

The enzyme catalyses 5-amino-1-(5-phospho-beta-D-ribosyl)imidazole-4-carboxamide + formate + ATP = 5-formamido-1-(5-phospho-D-ribosyl)imidazole-4-carboxamide + ADP + phosphate. It functions in the pathway purine metabolism; IMP biosynthesis via de novo pathway; 5-formamido-1-(5-phospho-D-ribosyl)imidazole-4-carboxamide from 5-amino-1-(5-phospho-D-ribosyl)imidazole-4-carboxamide (formate route): step 1/1. Catalyzes the ATP- and formate-dependent formylation of 5-aminoimidazole-4-carboxamide-1-beta-d-ribofuranosyl 5'-monophosphate (AICAR) to 5-formaminoimidazole-4-carboxamide-1-beta-d-ribofuranosyl 5'-monophosphate (FAICAR) in the absence of folates. This Pyrobaculum calidifontis (strain DSM 21063 / JCM 11548 / VA1) protein is 5-formaminoimidazole-4-carboxamide-1-(beta)-D-ribofuranosyl 5'-monophosphate synthetase.